The following is a 122-amino-acid chain: Riboflavin kinase (122 aa).

CDP is bound at residue 4–9; the sequence is GFGEGA. Mg(2+)-binding residues include T33 and N35. FMN contacts are provided by T84 and E92. Residue 97–100 coordinates CDP; sequence VNLR.

This sequence belongs to the archaeal riboflavin kinase family. Requires Mg(2+) as cofactor.

It catalyses the reaction riboflavin + CTP = CDP + FMN + H(+). It functions in the pathway cofactor biosynthesis; FMN biosynthesis; FMN from riboflavin (CTP route): step 1/1. In terms of biological role, catalyzes the CTP-dependent phosphorylation of riboflavin (vitamin B2) to form flavin mononucleotide (FMN). The sequence is that of Riboflavin kinase from Methanothermobacter thermautotrophicus (strain ATCC 29096 / DSM 1053 / JCM 10044 / NBRC 100330 / Delta H) (Methanobacterium thermoautotrophicum).